Consider the following 580-residue polypeptide: MSGASSGTAIGAHLFGVSPEYRVLIGDGGAGPSKSLSEVSFSVWYRSRAARLVILCLVASFLVPCLTFLIAEAVMGQTVTTPLSLTLDHWSEVRARAHNQGVEVRKKKWITLCEAEWVMMNVGWPREGTFSLDNISQVEKKIFAPGPHGHPDQVPYITTWRSLATDPPSWVRPFLPPPKPPTPLPQPLSPQPSAPLTSSLYPVVPKPDPPKPPVLPPDPSSPLIDLLTEEPPPYPGGHGPPPSGPRTPAASPIASRLRERRENPAEESQALPLREGPNNRPQYWPFSASDLYNWKSHNPPFSQDPVALTNLIESILVTHQPTWDDCQQLLQALLTGEERQRVLLEARKQVPGEDGRPTQLPNVIDETFPLTRPNWDFATPAGREHLRLYRQLLLAGLRGAARRPTNLAQVKQVVQGKEETPAAFLERLKEAYRMYTPYDPEDPGQAASVILSFIYQSSPDIRNKLQRLEGLQGFTLSDLLKEAEKIYNKRETPEEREERLWQRQEERDKKRHKEMTKVLATVVAQNRDKDREENKLGDQRKIPLGKDQCAYCKEKGHWVRDCPKRPRKKPANSTLLNLED.

Residues 1 to 51 (MSGASSGTAIGAHLFGVSPEYRVLIGDGGAGPSKSLSEVSFSVWYRSRAAR) are Cytoplasmic-facing. Residues 52-72 (LVILCLVASFLVPCLTFLIAE) traverse the membrane as a helical segment. Residues 73 to 580 (AVMGQTVTTP…ANSTLLNLED (508 aa)) lie on the Extracellular side of the membrane. An N-linked (GlcNAc...) asparagine; by host glycan is attached at N134. 3 disordered regions span residues 171-282 (VRPF…NRPQ), 491-514 (ETPE…RHKE), and 560-580 (RDCP…NLED). A compositionally biased stretch (pro residues) spans 174 to 193 (FLPPPKPPTPLPQPLSPQPS). Low complexity predominate over residues 194-203 (APLTSSLYPV). 2 stretches are compositionally biased toward pro residues: residues 204-220 (VPKP…PDPS) and 230-245 (EPPP…PSGP). A compositionally biased stretch (basic and acidic residues) spans 491–508 (ETPEEREERLWQRQEERD). Positions 571 to 580 (ANSTLLNLED) are enriched in polar residues. N572 carries an N-linked (GlcNAc...) asparagine; by host glycan.

Glycosylated by host. Post-translationally, cleaved by host near the middle of the molecule, releasing the c-terminal half containing capsid and nucleoprotein domains op GAG.

The protein resides in the host cell membrane. Its function is as follows. Plays a role in viral particle release. Presumably acts by facilitating the fission of the virion bud at the cell surface. In Feline leukemia virus, this protein is Glyco-Gag protein.